A 104-amino-acid chain; its full sequence is Flagellar hook-basal body complex protein FliE (104 aa).

Belongs to the FliE family.

The protein localises to the bacterial flagellum basal body. This Edwardsiella ictaluri (strain 93-146) protein is Flagellar hook-basal body complex protein FliE.